Reading from the N-terminus, the 601-residue chain is Somatic embryogenesis receptor kinase 5 (601 aa).

The N-terminal stretch at 1-24 is a signal peptide; the sequence is MEHGSSRGFIWLILFLDFVSRVTG. Topologically, residues 25–215 are extracellular; that stretch reads KTQVDALIAL…SPSPSPSGTS (191 aa). N-linked (GlcNAc...) asparagine glycans are attached at residues asparagine 52, asparagine 81, asparagine 105, asparagine 129, asparagine 151, and asparagine 184. LRR repeat units lie at residues 71–94, 95–118, 119–141, 143–165, and 166–188; these read SVTR…AQLP, NLQY…GDLM, ELVS…LGKL, KLRF…LTAL, and PLDV…GSFS. The chain crosses the membrane as a helical span at residues 216–236; sequence AAIVVGVAAGAALLFALAWWL. Residues 237–601 lie on the Cytoplasmic side of the membrane; sequence RRKLQGHFLD…IENDYPSGPR (365 aa). The residue at position 272 (threonine 272) is a Phosphothreonine. In terms of domain architecture, Protein kinase spans 275–572; the sequence is FSKRNVLGKG…KEEMPIHDFN (298 aa). ATP is bound at residue 281-289; that stretch reads LGKGRFGIL. Residue threonine 298 is modified to Phosphothreonine. Lysine 303 contributes to the ATP binding site. Residues serine 356 and serine 359 each carry the phosphoserine modification. The active-site Proton acceptor is the aspartate 402. Phosphothreonine is present on residues threonine 435, threonine 436, and threonine 441. The residue at position 449 (tyrosine 449) is a Phosphotyrosine. Serine 451 bears the Phosphoserine mark. Threonine 452 carries the phosphothreonine modification. Phosphoserine occurs at positions 456 and 506. A Phosphothreonine modification is found at threonine 532.

It belongs to the protein kinase superfamily. Ser/Thr protein kinase family. In terms of assembly, interacts with TMK4/BARK1. Autophosphorylated.

It is found in the cell membrane. The catalysed reaction is L-seryl-[protein] + ATP = O-phospho-L-seryl-[protein] + ADP + H(+). The enzyme catalyses L-threonyl-[protein] + ATP = O-phospho-L-threonyl-[protein] + ADP + H(+). In terms of biological role, serine/threonine-kinase of unknown function. This Arabidopsis thaliana (Mouse-ear cress) protein is Somatic embryogenesis receptor kinase 5 (SERK5).